The following is a 200-amino-acid chain: MILLKLYLTLAAILCQSRGTTSLDLDDLMTTNPEIQNEIINKHNDLRRTVDPPAKNMLKMSWDNTIAESAKRAALRCNQNEHTPVSGRTIGGVVCGENYFMSSNLRTWSFGIQSWFDERNYFKFGFGPTRAGVMVGHYTQVVWYKSYKMGCAINLCPNEPLKYFLVCQYCPGGNVVGRKYEPYAIGEPCAACPNNCDNGL.

A signal peptide spans 1–22 (MILLKLYLTLAAILCQSRGTTS). The 129-residue stretch at 41-169 (NKHNDLRRTV…PLKYFLVCQY (129 aa)) folds into the SCP domain. Disulfide bonds link Cys-77–Cys-156, Cys-95–Cys-170, Cys-151–Cys-167, and Cys-189–Cys-196.

It belongs to the CRISP family. Contains 8 disulfide bonds. In terms of tissue distribution, expressed by the venom gland.

Its subcellular location is the secreted. Its function is as follows. Blocks ryanodine receptors, and potassium channels. The chain is Cysteine-rich venom protein VAR8 from Varanus acanthurus (Ridge-tailed monitor).